A 1436-amino-acid polypeptide reads, in one-letter code: Antigen WC1.1 (1436 aa).

The N-terminal stretch at 1-25 is a signal peptide; the sequence is MALGRHLSLRGLCVLLLGTMVGGQA. 3 SRCR domains span residues 28–131, 134–234, and 239–340; these read LRLK…VVCS, VRLA…VVCS, and VRLM…VICS. Cystine bridges form between Cys-66–Cys-130 and Cys-97–Cys-107. An N-linked (GlcNAc...) asparagine glycan is attached at Asn-162. 2 disulfides stabilise this stretch: Cys-172-Cys-233 and Cys-203-Cys-213. N-linked (GlcNAc...) asparagine glycosylation is found at Asn-244 and Asn-256. Intrachain disulfides connect Cys-265–Cys-329, Cys-278–Cys-339, and Cys-309–Cys-319. N-linked (GlcNAc...) asparagine glycans are attached at residues Asn-351, Asn-424, and Asn-444. SRCR domains lie at 376-476, 481-581, 586-686, 689-789, and 794-895; these read LRLV…VICS, LRMV…IWCA, IRLV…VICS, VRLA…VVCS, and VQLM…VICS. 3 disulfides stabilise this stretch: Cys-401–Cys-465, Cys-414–Cys-475, and Cys-445–Cys-455. 2 N-linked (GlcNAc...) asparagine glycosylation sites follow: Asn-499 and Asn-531. 6 disulfide bridges follow: Cys-506–Cys-570, Cys-519–Cys-580, Cys-550–Cys-560, Cys-611–Cys-675, Cys-624–Cys-685, and Cys-655–Cys-665. Asn-717 carries N-linked (GlcNAc...) asparagine glycosylation. 2 cysteine pairs are disulfide-bonded: Cys-727–Cys-788 and Cys-758–Cys-768. Asn-799 carries an N-linked (GlcNAc...) asparagine glycan. Cystine bridges form between Cys-820-Cys-884, Cys-833-Cys-894, and Cys-864-Cys-874. N-linked (GlcNAc...) asparagine glycans are attached at residues Asn-897, Asn-979, and Asn-999. SRCR domains lie at 931 to 1031, 1036 to 1136, and 1155 to 1255; these read LRLV…VICS, LRMV…ISCE, and LRLR…VRCS. Disulfide bonds link Cys-956/Cys-1020, Cys-969/Cys-1030, and Cys-1000/Cys-1010. 2 N-linked (GlcNAc...) asparagine glycosylation sites follow: Asn-1054 and Asn-1086. Disulfide bonds link Cys-1061-Cys-1125, Cys-1074-Cys-1135, and Cys-1105-Cys-1115. N-linked (GlcNAc...) asparagine glycosylation is found at Asn-1173 and Asn-1214. Disulfide bonds link Cys-1180–Cys-1244, Cys-1193–Cys-1254, and Cys-1224–Cys-1234. The disordered stretch occupies residues 1337–1410; it reads EGLGSPDQMT…PGEGEESFWL (74 aa). Positions 1348–1358 are enriched in acidic residues; that stretch reads VPDENYDDAEE. Positions 1384–1393 are enriched in polar residues; that stretch reads RSSQTGSFLN. The N-linked (GlcNAc...) asparagine glycan is linked to Asn-1393.

Expressed on subsets of CD4-CD8- gamma delta T lymphocytes.

It localises to the secreted. In Bos taurus (Bovine), this protein is Antigen WC1.1.